Consider the following 402-residue polypeptide: Alkaline proteinase (402 aa).

The first 20 residues, 1 to 20 (MVTLRRLAVLLGAIPAALAA), serve as a signal peptide directing secretion. A propeptide spanning residues 21-120 (PTTQKREVVP…EQDEGEFSTA (100 aa)) is cleaved from the precursor. Positions 32-108 (KYIVTLKEGA…EVEEDQIWHL (77 aa)) constitute an Inhibitor I9 domain. A Peptidase S8 domain is found at 128–402 (AWGLGTISHR…NRILYNGNGA (275 aa)). Catalysis depends on charge relay system residues Asp-160, His-191, and Ser-347. Over residues 382–392 (GRVSNPGSGSP) the composition is skewed to polar residues. The tract at residues 382–402 (GRVSNPGSGSPNRILYNGNGA) is disordered.

This sequence belongs to the peptidase S8 family.

The protein is Alkaline proteinase (ALP) of Hapsidospora chrysogena (Acremonium chrysogenum).